The sequence spans 92 residues: Small ribosomal subunit protein uS19 (92 aa).

The protein belongs to the universal ribosomal protein uS19 family.

Protein S19 forms a complex with S13 that binds strongly to the 16S ribosomal RNA. This Leptospira biflexa serovar Patoc (strain Patoc 1 / Ames) protein is Small ribosomal subunit protein uS19.